Consider the following 764-residue polypeptide: 5-methyltetrahydropteroyltriglutamate--homocysteine methyltransferase (764 aa).

Residues 16–19 and Lys-121 each bind 5-methyltetrahydropteroyltri-L-glutamate; that span reads RELK. L-homocysteine is bound by residues 440–442 and Glu-493; that span reads IGS. L-methionine contacts are provided by residues 440–442 and Glu-493; that span reads IGS. 5-methyltetrahydropteroyltri-L-glutamate is bound by residues 524–525 and Trp-570; that span reads RC. L-homocysteine is bound at residue Asp-608. Asp-608 is an L-methionine binding site. Residue Glu-614 coordinates 5-methyltetrahydropteroyltri-L-glutamate. Zn(2+) is bound by residues His-650, Cys-652, and Glu-674. The Proton donor role is filled by His-703. A Zn(2+)-binding site is contributed by Cys-735.

This sequence belongs to the vitamin-B12 independent methionine synthase family. It depends on Zn(2+) as a cofactor.

It catalyses the reaction 5-methyltetrahydropteroyltri-L-glutamate + L-homocysteine = tetrahydropteroyltri-L-glutamate + L-methionine. Its pathway is amino-acid biosynthesis; L-methionine biosynthesis via de novo pathway; L-methionine from L-homocysteine (MetE route): step 1/1. In terms of biological role, catalyzes the transfer of a methyl group from 5-methyltetrahydrofolate to homocysteine resulting in methionine formation. The chain is 5-methyltetrahydropteroyltriglutamate--homocysteine methyltransferase from Burkholderia ambifaria (strain ATCC BAA-244 / DSM 16087 / CCUG 44356 / LMG 19182 / AMMD) (Burkholderia cepacia (strain AMMD)).